Reading from the N-terminus, the 336-residue chain is Fructose-1,6-bisphosphatase class 1 (336 aa).

Residues glutamate 92, aspartate 115, leucine 117, and aspartate 118 each coordinate Mg(2+). Substrate-binding positions include aspartate 118–serine 121, asparagine 211, tyrosine 244, tyrosine 262–tyrosine 264, and lysine 274. Residue glutamate 280 coordinates Mg(2+).

Belongs to the FBPase class 1 family. In terms of assembly, homotetramer. Mg(2+) is required as a cofactor.

The protein resides in the cytoplasm. The enzyme catalyses beta-D-fructose 1,6-bisphosphate + H2O = beta-D-fructose 6-phosphate + phosphate. Its pathway is carbohydrate biosynthesis; gluconeogenesis. This chain is Fructose-1,6-bisphosphatase class 1, found in Hahella chejuensis (strain KCTC 2396).